Here is a 363-residue protein sequence, read N- to C-terminus: tRNA N6-adenosine threonylcarbamoyltransferase (363 aa).

The Fe cation site is built by His121 and His125. Residues 143-147 (LASGG), Asp176, Gly189, and Asn287 contribute to the substrate site. Asp315 is a Fe cation binding site.

It belongs to the KAE1 / TsaD family. Requires Fe(2+) as cofactor.

Its subcellular location is the cytoplasm. The catalysed reaction is L-threonylcarbamoyladenylate + adenosine(37) in tRNA = N(6)-L-threonylcarbamoyladenosine(37) in tRNA + AMP + H(+). Functionally, required for the formation of a threonylcarbamoyl group on adenosine at position 37 (t(6)A37) in tRNAs that read codons beginning with adenine. Is involved in the transfer of the threonylcarbamoyl moiety of threonylcarbamoyl-AMP (TC-AMP) to the N6 group of A37, together with TsaE and TsaB. TsaD likely plays a direct catalytic role in this reaction. This is tRNA N6-adenosine threonylcarbamoyltransferase from Rhodopseudomonas palustris (strain TIE-1).